The sequence spans 98 residues: NADH-ubiquinone oxidoreductase chain 4L (98 aa).

The next 3 membrane-spanning stretches (helical) occupy residues 1-21 (MTMVYANIFLAFITSLMGLLM), 29-49 (SLLCLEGMMLSLFVMMTVTIL), and 61-81 (IVLLVFAACEAALGLSLLVMV).

This sequence belongs to the complex I subunit 4L family. Core subunit of respiratory chain NADH dehydrogenase (Complex I) which is composed of 45 different subunits.

The protein localises to the mitochondrion inner membrane. It catalyses the reaction a ubiquinone + NADH + 5 H(+)(in) = a ubiquinol + NAD(+) + 4 H(+)(out). Its function is as follows. Core subunit of the mitochondrial membrane respiratory chain NADH dehydrogenase (Complex I) which catalyzes electron transfer from NADH through the respiratory chain, using ubiquinone as an electron acceptor. Part of the enzyme membrane arm which is embedded in the lipid bilayer and involved in proton translocation. The chain is NADH-ubiquinone oxidoreductase chain 4L (MT-ND4L) from Monachus monachus (Mediterranean monk seal).